A 112-amino-acid chain; its full sequence is Conotoxin vil14.5 (112 aa).

The signal sequence occupies residues 1–22 (MGFRVLVLVVMATTSALPFTFS). A propeptide spanning residues 23–85 (EEPGRSPFRP…FAELSVGQRR (63 aa)) is cleaved from the precursor. Residues 53–74 (RADGQPPDMRQPEMRRPEVRQP) are disordered. Positions 62–74 (RQPEMRRPEVRQP) are enriched in basic and acidic residues. 2 disulfides stabilise this stretch: Cys-91-Cys-111 and Cys-95-Cys-107.

This sequence belongs to the conotoxin R superfamily. Expressed by the venom duct.

The protein localises to the secreted. The chain is Conotoxin vil14.5 from Conus villepinii (Villepin's cone).